A 248-amino-acid polypeptide reads, in one-letter code: Ribonuclease PH (248 aa).

Phosphate-binding positions include Arg-86 and 124–126 (GTR).

The protein belongs to the RNase PH family. As to quaternary structure, homohexameric ring arranged as a trimer of dimers.

The enzyme catalyses tRNA(n+1) + phosphate = tRNA(n) + a ribonucleoside 5'-diphosphate. Its function is as follows. Phosphorolytic 3'-5' exoribonuclease that plays an important role in tRNA 3'-end maturation. Removes nucleotide residues following the 3'-CCA terminus of tRNAs; can also add nucleotides to the ends of RNA molecules by using nucleoside diphosphates as substrates, but this may not be physiologically important. Probably plays a role in initiation of 16S rRNA degradation (leading to ribosome degradation) during starvation. This Clostridium perfringens (strain 13 / Type A) protein is Ribonuclease PH.